The chain runs to 142 residues: uncharacterized protein (142 aa).

2 N-linked (GlcNAc...) asparagine; by host glycosylation sites follow: Asn29 and Asn67. A helical membrane pass occupies residues 88–108; the sequence is VFYLGYPVIFIIGVTYFSIIA.

The protein localises to the membrane. This is an uncharacterized protein from Acanthamoeba polyphaga mimivirus (APMV).